Here is a 77-residue protein sequence, read N- to C-terminus: Large ribosomal subunit protein bL28 (77 aa).

This sequence belongs to the bacterial ribosomal protein bL28 family.

This Polaromonas sp. (strain JS666 / ATCC BAA-500) protein is Large ribosomal subunit protein bL28.